Consider the following 147-residue polypeptide: Bis(5'-nucleosyl)-tetraphosphatase [asymmetrical] (147 aa).

N-acetylalanine is present on Ala2. A Nudix hydrolase domain is found at 2–139; it reads ALRACGLIIF…EMKAALQEGH (138 aa). Residues 43–64 carry the Nudix box motif; it reads GHVEPGESDLETALRETQEEAG.

The protein belongs to the Nudix hydrolase family. It depends on a divalent metal cation as a cofactor.

The catalysed reaction is P(1),P(4)-bis(5'-guanosyl) tetraphosphate + H2O = GMP + GTP + 2 H(+). It carries out the reaction a 5'-end CoA-ribonucleoside in mRNA + H2O = a 5'-end phospho-adenosine-phospho-ribonucleoside in mRNA + (R)-4'-phosphopantetheine + 2 H(+). It catalyses the reaction a 5'-end FAD-phospho-ribonucleoside in mRNA + H2O = a 5'-end phospho-adenosine-phospho-ribonucleoside in mRNA + FMN + 2 H(+). In terms of biological role, catalyzes the asymmetric hydrolysis of diadenosine 5',5'''-P1,P4-tetraphosphate (Ap4A) to yield AMP and ATP. Exhibits decapping activity towards FAD-capped RNAs and dpCoA-capped RNAs in vitro. The protein is Bis(5'-nucleosyl)-tetraphosphatase [asymmetrical] (NUDT2) of Bos taurus (Bovine).